The following is an 83-amino-acid chain: U5-theraphotoxin-Hs1b 2 (83 aa).

The first 21 residues, 1 to 21, serve as a signal peptide directing secretion; that stretch reads MQTSMFLTLTGLVLLFVVCYA. Positions 22–49 are excised as a propeptide; the sequence is SESEEKEFPKELLSSIFAADSDFKEEER. 3 disulfide bridges follow: cysteine 51-cysteine 63, cysteine 56-cysteine 68, and cysteine 62-cysteine 75.

Belongs to the neurotoxin 10 (Hwtx-1) family. 51 (Hntx-8) subfamily. Hntx-8 sub-subfamily. Expressed by the venom gland.

Its subcellular location is the secreted. Agglutinates erythrocytes. The chain is U5-theraphotoxin-Hs1b 2 from Cyriopagopus schmidti (Chinese bird spider).